We begin with the raw amino-acid sequence, 257 residues long: NAD kinase (257 aa).

Catalysis depends on Asp44, which acts as the Proton acceptor. Residues 44 to 45 (DG), Arg49, 116 to 117 (NE), Asp146, Ala154, and 157 to 162 (TAYNLS) contribute to the NAD(+) site.

This sequence belongs to the NAD kinase family. It depends on a divalent metal cation as a cofactor.

It is found in the cytoplasm. It carries out the reaction NAD(+) + ATP = ADP + NADP(+) + H(+). Functionally, involved in the regulation of the intracellular balance of NAD and NADP, and is a key enzyme in the biosynthesis of NADP. Catalyzes specifically the phosphorylation on 2'-hydroxyl of the adenosine moiety of NAD to yield NADP. In Rhizorhabdus wittichii (strain DSM 6014 / CCUG 31198 / JCM 15750 / NBRC 105917 / EY 4224 / RW1) (Sphingomonas wittichii), this protein is NAD kinase.